A 226-amino-acid polypeptide reads, in one-letter code: ATP synthase F(0) complex subunit a (226 aa).

The next 6 membrane-spanning stretches (helical) occupy residues 12 to 32 (PTMMGLPIVILIIMFPSILFP), 68 to 88 (WALMLMSLILFIGSTNLLGLL), 97 to 117 (QLSMNLGMAIPLWAGTVITGF), 138 to 158 (IPMLVVIETISLFIQPMALAV), 164 to 184 (ITAGHLLMHLIGGAALALMNI), and 200 to 222 (TILEFAVALIQAYVFTLLVSLYL).

Belongs to the ATPase A chain family. Component of the ATP synthase complex composed at least of ATP5F1A/subunit alpha, ATP5F1B/subunit beta, ATP5MC1/subunit c (homooctomer), MT-ATP6/subunit a, MT-ATP8/subunit 8, ATP5ME/subunit e, ATP5MF/subunit f, ATP5MG/subunit g, ATP5MK/subunit k, ATP5MJ/subunit j, ATP5F1C/subunit gamma, ATP5F1D/subunit delta, ATP5F1E/subunit epsilon, ATP5PF/subunit F6, ATP5PB/subunit b, ATP5PD/subunit d, ATP5PO/subunit OSCP. ATP synthase complex consists of a soluble F(1) head domain (subunits alpha(3) and beta(3)) - the catalytic core - and a membrane F(0) domain - the membrane proton channel (subunits c, a, 8, e, f, g, k and j). These two domains are linked by a central stalk (subunits gamma, delta, and epsilon) rotating inside the F1 region and a stationary peripheral stalk (subunits F6, b, d, and OSCP). Interacts with DNAJC30; interaction is direct.

The protein resides in the mitochondrion inner membrane. The catalysed reaction is H(+)(in) = H(+)(out). Its function is as follows. Subunit a, of the mitochondrial membrane ATP synthase complex (F(1)F(0) ATP synthase or Complex V) that produces ATP from ADP in the presence of a proton gradient across the membrane which is generated by electron transport complexes of the respiratory chain. ATP synthase complex consist of a soluble F(1) head domain - the catalytic core - and a membrane F(1) domain - the membrane proton channel. These two domains are linked by a central stalk rotating inside the F(1) region and a stationary peripheral stalk. During catalysis, ATP synthesis in the catalytic domain of F(1) is coupled via a rotary mechanism of the central stalk subunits to proton translocation. With the subunit c (ATP5MC1), forms the proton-conducting channel in the F(0) domain, that contains two crucial half-channels (inlet and outlet) that facilitate proton movement from the mitochondrial intermembrane space (IMS) into the matrix. Protons are taken up via the inlet half-channel and released through the outlet half-channel, following a Grotthuss mechanism. This Felis catus (Cat) protein is ATP synthase F(0) complex subunit a.